Here is an 88-residue protein sequence, read N- to C-terminus: Cell division topological specificity factor (88 aa).

This sequence belongs to the MinE family.

In terms of biological role, prevents the cell division inhibition by proteins MinC and MinD at internal division sites while permitting inhibition at polar sites. This ensures cell division at the proper site by restricting the formation of a division septum at the midpoint of the long axis of the cell. This Citrobacter koseri (strain ATCC BAA-895 / CDC 4225-83 / SGSC4696) protein is Cell division topological specificity factor.